Here is a 186-residue protein sequence, read N- to C-terminus: Crossover junction endodeoxyribonuclease RuvC (186 aa).

Active-site residues include aspartate 7, glutamate 73, and aspartate 145. 3 residues coordinate Mg(2+): aspartate 7, glutamate 73, and aspartate 145.

Belongs to the RuvC family. In terms of assembly, homodimer which binds Holliday junction (HJ) DNA. The HJ becomes 2-fold symmetrical on binding to RuvC with unstacked arms; it has a different conformation from HJ DNA in complex with RuvA. In the full resolvosome a probable DNA-RuvA(4)-RuvB(12)-RuvC(2) complex forms which resolves the HJ. The cofactor is Mg(2+).

It is found in the cytoplasm. The catalysed reaction is Endonucleolytic cleavage at a junction such as a reciprocal single-stranded crossover between two homologous DNA duplexes (Holliday junction).. Its function is as follows. The RuvA-RuvB-RuvC complex processes Holliday junction (HJ) DNA during genetic recombination and DNA repair. Endonuclease that resolves HJ intermediates. Cleaves cruciform DNA by making single-stranded nicks across the HJ at symmetrical positions within the homologous arms, yielding a 5'-phosphate and a 3'-hydroxyl group; requires a central core of homology in the junction. The consensus cleavage sequence is 5'-(A/T)TT(C/G)-3'. Cleavage occurs on the 3'-side of the TT dinucleotide at the point of strand exchange. HJ branch migration catalyzed by RuvA-RuvB allows RuvC to scan DNA until it finds its consensus sequence, where it cleaves and resolves the cruciform DNA. The protein is Crossover junction endodeoxyribonuclease RuvC of Acidovorax sp. (strain JS42).